The chain runs to 626 residues: MSKFENISKRSHELDPCTNSNYAEFKVVHTDLSLSVSFESKNISGNVIYTLKKLTKTNRLVLDTSFLEVSTAKVNGKEVVFELLPHKAPFGSPLVIPIDGENESLTVEVDFRTTDKCTAIQFIQGDTGPYVFSQCQAIHARSLFPCFDTPGVKSPYKFTAKSPSVCTMSGRPQPSNEAGVYHFDQPIPIPSYLVSITSGNLHKAPIGPRSDVYSEEPSLKDCQWEFEKDMENFIQIAEKIVFEYEWSRFDSLVLPSSFPYGGMEIPNMTQLTPTLISKDRTQVKVMAHELAHSWSGNLVTNCSWEHFWLNEGWTVYLERRIIGAIAAAEAQEEGRANPEKYGEQVRHFNAIIGWNALVETVESFDPKFTSLVWDLASGDPDDAFSRIPYEKGFNFLFHIETKVGGTKEFDPFIKHYFKKFRYQSLNSAQFIETLYDFYTPLGKKDALDTIDLEKWLFQPGLPDDPKFDTTLADQVYVLVEKWVDFVKSGETEVKFSEADVKEFEGEQEMLFIETLTDRFKDLDVSPELIRKLPSIYPKYAASKNGEVLARWNELLIKYGNYTSSDEQVKFFADWLGTVGRMKYVRPGYKLLQTSVSIEFAVETFKRFEDKYHPICKTMVQKDLNLA.

Residues 134–136 (QCQ) and 259–264 (PYGGME) contribute to the substrate site. His-288 is a binding site for Zn(2+). Catalysis depends on Glu-289, which acts as the Proton acceptor. Residues His-292 and Glu-311 each coordinate Zn(2+). The active-site Proton donor is Tyr-389.

Belongs to the peptidase M1 family. It depends on Zn(2+) as a cofactor.

It localises to the cytoplasm. The protein resides in the nucleus. It carries out the reaction an epoxide + H2O = an ethanediol. Functionally, aminopeptidase that preferentially cleaves di- and tripeptides. Also has low epoxide hydrolase activity (in vitro). Can hydrolyze the epoxide leukotriene LTA(4) but it forms preferentially 5,6-dihydroxy-7,9,11,14-eicosatetraenoic acid rather than the cytokine leukotriene B(4) as the product compared to the homologous mammalian enzyme (in vitro). The sequence is that of Leucine aminopeptidase 2-1 (LKA4) from Scheffersomyces stipitis (strain ATCC 58785 / CBS 6054 / NBRC 10063 / NRRL Y-11545) (Yeast).